Reading from the N-terminus, the 1058-residue chain is Carbamoyl phosphate synthase large chain (1058 aa).

The segment at Met1–Glu401 is carboxyphosphate synthetic domain. Residues Arg129, Arg169, Gly175, Gly176, Arg208, Ile210, Glu215, Gly241, Ile242, His243, Gln284, and Glu298 each coordinate ATP. The 195-residue stretch at Lys133 to Val327 folds into the ATP-grasp 1 domain. Residues Gln284, Glu298, and Asn300 each coordinate Mg(2+). Residues Gln284, Glu298, and Asn300 each contribute to the Mn(2+) site. The oligomerization domain stretch occupies residues Ile402–Ser546. Residues Val547–Asn929 are carbamoyl phosphate synthetic domain. Residues Glu671 to Leu861 enclose the ATP-grasp 2 domain. Residues Arg707, Ser746, Ile748, Glu752, Gly777, Val778, His779, Ser780, Gln820, and Glu832 each coordinate ATP. Positions 820, 832, and 834 each coordinate Mg(2+). Mn(2+)-binding residues include Gln820, Glu832, and Asn834. The MGS-like domain maps to Ser930–Ile1058. Residues Ser930–Ile1058 form an allosteric domain region.

This sequence belongs to the CarB family. As to quaternary structure, composed of two chains; the small (or glutamine) chain promotes the hydrolysis of glutamine to ammonia, which is used by the large (or ammonia) chain to synthesize carbamoyl phosphate. Tetramer of heterodimers (alpha,beta)4. Requires Mg(2+) as cofactor. Mn(2+) is required as a cofactor.

The catalysed reaction is hydrogencarbonate + L-glutamine + 2 ATP + H2O = carbamoyl phosphate + L-glutamate + 2 ADP + phosphate + 2 H(+). It carries out the reaction hydrogencarbonate + NH4(+) + 2 ATP = carbamoyl phosphate + 2 ADP + phosphate + 2 H(+). It participates in amino-acid biosynthesis; L-arginine biosynthesis; carbamoyl phosphate from bicarbonate: step 1/1. Its pathway is pyrimidine metabolism; UMP biosynthesis via de novo pathway; (S)-dihydroorotate from bicarbonate: step 1/3. Its function is as follows. Large subunit of the glutamine-dependent carbamoyl phosphate synthetase (CPSase). CPSase catalyzes the formation of carbamoyl phosphate from the ammonia moiety of glutamine, carbonate, and phosphate donated by ATP, constituting the first step of 2 biosynthetic pathways, one leading to arginine and/or urea and the other to pyrimidine nucleotides. The large subunit (synthetase) binds the substrates ammonia (free or transferred from glutamine from the small subunit), hydrogencarbonate and ATP and carries out an ATP-coupled ligase reaction, activating hydrogencarbonate by forming carboxy phosphate which reacts with ammonia to form carbamoyl phosphate. The protein is Carbamoyl phosphate synthase large chain of Streptococcus pyogenes serotype M5 (strain Manfredo).